Reading from the N-terminus, the 205-residue chain is Octanoyltransferase (205 aa).

The BPL/LPL catalytic domain occupies 30–205; that stretch reads ERTADEIWLL…QALRARLGYA (176 aa). Substrate-binding positions include 69 to 76, 136 to 138, and 149 to 151; these read RGGQVTYH, SLG, and GLA. The active-site Acyl-thioester intermediate is Cys167.

This sequence belongs to the LipB family.

The protein localises to the cytoplasm. It catalyses the reaction octanoyl-[ACP] + L-lysyl-[protein] = N(6)-octanoyl-L-lysyl-[protein] + holo-[ACP] + H(+). Its pathway is protein modification; protein lipoylation via endogenous pathway; protein N(6)-(lipoyl)lysine from octanoyl-[acyl-carrier-protein]: step 1/2. In terms of biological role, catalyzes the transfer of endogenously produced octanoic acid from octanoyl-acyl-carrier-protein onto the lipoyl domains of lipoate-dependent enzymes. Lipoyl-ACP can also act as a substrate although octanoyl-ACP is likely to be the physiological substrate. The protein is Octanoyltransferase of Ectopseudomonas mendocina (strain ymp) (Pseudomonas mendocina).